Reading from the N-terminus, the 264-residue chain is uncharacterized protein (264 aa).

A helical transmembrane segment spans residues 9 to 29 (LVISILSLIATLSISFNIYFI).

The protein localises to the membrane. This is an uncharacterized protein from Ureaplasma parvum serovar 3 (strain ATCC 700970).